The sequence spans 902 residues: Nitrate reductase [NADPH] (902 aa).

Cysteine 182 contributes to the Mo-molybdopterin binding site. A Cytochrome b5 heme-binding domain is found at 537–612 (LPLIFADEVA…LKKYCIGRCS (76 aa)). The heme site is built by histidine 572 and histidine 595. Residues 637 to 751 (RTKVPIVLIS…KGPLGHFTYY (115 aa)) form the FAD-binding FR-type domain. Residues 689–692 (RAYT), 708–712 (LIKVY), phenylalanine 713, 725–727 (LFS), and threonine 778 each bind FAD. 872 to 879 (CMCGPEGM) is a binding site for NADP(+).

Belongs to the nitrate reductase family. Homodimer. It depends on FAD as a cofactor. Heme is required as a cofactor. Mo-molybdopterin serves as cofactor.

It catalyses the reaction nitrite + NADP(+) + H2O = nitrate + NADPH + H(+). Its function is as follows. Nitrate reductase is a key enzyme involved in the first step of nitrate assimilation in plants, fungi and bacteria. The protein is Nitrate reductase [NADPH] (NIAA) of Phytophthora infestans (Potato late blight agent).